Reading from the N-terminus, the 192-residue chain is uncharacterized protein (192 aa).

Residues 17–73 (MLRGSGKKPIQRLAKAPAATASSKTSEWRATTAYGFLPAGGDVRPHSPRYESQGVLS) form a disordered region. Positions 30-41 (AKAPAATASSKT) are enriched in low complexity.

This is an uncharacterized protein from Sinorhizobium fredii (strain NBRC 101917 / NGR234).